We begin with the raw amino-acid sequence, 449 residues long: Glucose-6-phosphate isomerase (449 aa).

The Proton donor role is filled by Glu-291. Residues His-312 and Lys-426 contribute to the active site.

Belongs to the GPI family.

Its subcellular location is the cytoplasm. The enzyme catalyses alpha-D-glucose 6-phosphate = beta-D-fructose 6-phosphate. Its pathway is carbohydrate biosynthesis; gluconeogenesis. It participates in carbohydrate degradation; glycolysis; D-glyceraldehyde 3-phosphate and glycerone phosphate from D-glucose: step 2/4. Its function is as follows. Catalyzes the reversible isomerization of glucose-6-phosphate to fructose-6-phosphate. The polypeptide is Glucose-6-phosphate isomerase (Streptococcus pneumoniae (strain ATCC BAA-255 / R6)).